The primary structure comprises 394 residues: Aromatic-amino-acid aminotransferase (394 aa).

Substrate contacts are provided by Gly34, Tyr65, Trp127, and Asn180. Lys243 carries the post-translational modification N6-(pyridoxal phosphate)lysine. A substrate-binding site is contributed by Arg371.

This sequence belongs to the class-I pyridoxal-phosphate-dependent aminotransferase family. In terms of assembly, homodimer. Pyridoxal 5'-phosphate is required as a cofactor.

It localises to the cytoplasm. It carries out the reaction an aromatic L-alpha-amino acid + 2-oxoglutarate = an aromatic oxo-acid + L-glutamate. Functionally, shows activities toward both dicarboxylic and aromatic substrates. This is Aromatic-amino-acid aminotransferase (tyrB) from Paracoccus denitrificans.